A 549-amino-acid polypeptide reads, in one-letter code: Glucose-6-phosphate isomerase (549 aa).

Glu-355 acts as the Proton donor in catalysis. Catalysis depends on residues His-386 and Lys-514.

Belongs to the GPI family.

The protein localises to the cytoplasm. It carries out the reaction alpha-D-glucose 6-phosphate = beta-D-fructose 6-phosphate. It functions in the pathway carbohydrate biosynthesis; gluconeogenesis. The protein operates within carbohydrate degradation; glycolysis; D-glyceraldehyde 3-phosphate and glycerone phosphate from D-glucose: step 2/4. Functionally, catalyzes the reversible isomerization of glucose-6-phosphate to fructose-6-phosphate. The protein is Glucose-6-phosphate isomerase of Salmonella gallinarum (strain 287/91 / NCTC 13346).